The sequence spans 269 residues: MAARLHLRLGPRLRGFASSFAPLLAAHPRALPLSRMGSVAPLAAARARRGFGSAVATAPPAEDEDFATAADLQFEPPLKVVKYPDPILRARNKRINTFDDNLRSLTDEMFDVMYKTDGIGLSAPQVGVNVQLMVFNPAGVKGEGEEIVLVNPVVYKMSKRLLVYEEGCLSFPGIYANVVRPDNVKIDAQDVTGAKIKVKLSGLSARVFQHEFDHLQGILFFDRMSLDVLESVREGLKDLEKKYEESTGLVSPESIENYKGRKDLISFSR.

Residues 1–51 (MAARLHLRLGPRLRGFASSFAPLLAAHPRALPLSRMGSVAPLAAARARRGF) constitute a chloroplast transit peptide. The Fe cation site is built by C168 and H210. E211 is an active-site residue. Residue H214 participates in Fe cation binding.

This sequence belongs to the polypeptide deformylase family. As to quaternary structure, homodimer. Fe(2+) serves as cofactor. Mainly expressed in mature leaves and sheaths.

The protein resides in the plastid. The protein localises to the chloroplast stroma. It localises to the mitochondrion. It carries out the reaction N-terminal N-formyl-L-methionyl-[peptide] + H2O = N-terminal L-methionyl-[peptide] + formate. With respect to regulation, inhibited by actinonin. Removes the formyl group from the N-terminal Met of newly synthesized proteins. The sequence is that of Peptide deformylase 1B, chloroplastic (PDF1B) from Oryza sativa subsp. japonica (Rice).